The primary structure comprises 247 residues: ATP synthase subunit a, chloroplastic (247 aa).

The next 5 helical transmembrane spans lie at 38-58, 95-115, 134-154, 199-219, and 220-240; these read QVLITSWVVIAILLGSATIAV, VPFIGTMFLFIFVSNWSGALL, INTTVALALLTSVAYFYAGLT, LVVVVLVSLVPLVVPIPVMLL, and GLFTSGIQALIFATLAAAYIG.

This sequence belongs to the ATPase A chain family. In terms of assembly, F-type ATPases have 2 components, CF(1) - the catalytic core - and CF(0) - the membrane proton channel. CF(1) has five subunits: alpha(3), beta(3), gamma(1), delta(1), epsilon(1). CF(0) has four main subunits: a, b, b' and c.

The protein resides in the plastid. It is found in the chloroplast thylakoid membrane. In terms of biological role, key component of the proton channel; it plays a direct role in the translocation of protons across the membrane. In Solanum lycopersicum (Tomato), this protein is ATP synthase subunit a, chloroplastic.